A 648-amino-acid polypeptide reads, in one-letter code: Magnetosome protein MamZ (648 aa).

The interval 1–431 (MLEAWMPKSG…YAAWLLANGI (431 aa)) is major facilitator domain. 18 consecutive transmembrane segments (helical) span residues 28-49 (IIYL…IQPL), 69-87 (IQVV…FGLL), 94-113 (VRII…MSLL), 119-143 (LAFG…ADTV), 163-182 (LMGN…SAII), 188-207 (YKGG…IAGF), 252-273 (FYTR…ISVS), 285-305 (AHAA…IPLW), 317-335 (AIGA…LGMF), 341-361 (WLVA…FVTL), 373-395 (ILGA…LVQS), 407-428 (APFI…WLLA), 449-468 (PLVF…RSVI), 488-506 (YLGD…MRPV), 518-538 (YRRM…LAYV), 558-574 (FILL…PLAF), 595-612 (ATYV…LAAN), and 618-634 (PYVY…YRFY). The segment at 444–645 (KVDWKPLVFL…WRGGNVLRAL (202 aa)) is ferric reductase-like domain, required for correct magnetite crystal formation.

This sequence in the N-terminal section; belongs to the major facilitator superfamily. In terms of assembly, probably interacts with FtsZ-like and MamY proteins.

Its subcellular location is the magnetosome membrane. Functionally, required for correct biomineralization of the magnetosome; probably converts and then transports some form of iron. It is partially functionally redundant with MamH. May function with MamX, MamY amd Mms6 in biomineralization. Despite its strong similarity to MsrQ (AC V6EX82) this protein does not genetically interact with bona fide MsrP (AC V6F0A4), which is encoded elsewhere in the genome. This Magnetospirillum gryphiswaldense (strain DSM 6361 / JCM 21280 / NBRC 15271 / MSR-1) protein is Magnetosome protein MamZ.